A 169-amino-acid chain; its full sequence is Mediator of RNA polymerase II transcription subunit 28 (169 aa).

The tract at residues 1–35 (MFSAQQPGPPPPNQPGAPAGLMSTPPGAKNPSSTL) is disordered. Residues 99–137 (EQVIKEDVSELRNELQRKEALIQKHLTKLRSWQQVLEEI) adopt a coiled-coil conformation.

This sequence belongs to the Mediator complex subunit 28 family. In terms of assembly, component of the Mediator complex.

The protein resides in the nucleus. Functionally, component of the Mediator complex, a coactivator involved in the regulated transcription of nearly all RNA polymerase II-dependent genes. Mediator functions as a bridge to convey information from gene-specific regulatory proteins to the basal RNA polymerase II transcription machinery. Mediator is recruited to promoters by direct interactions with regulatory proteins and serves as a scaffold for the assembly of a functional preinitiation complex with RNA polymerase II and the general transcription factors. This chain is Mediator of RNA polymerase II transcription subunit 28 (med28), found in Xenopus tropicalis (Western clawed frog).